A 341-amino-acid chain; its full sequence is MNLITLENFLDNSSFLILLLTMLIYWAGAAFPGMSILPTLGTAGVAIANLSIATLLGSRWLEGGYFPLSNLYESLFFLAWGVTAVHLIAEKMSRSTLVGVVTTPVAMGITAFAALSLPADMQTSAPLVPALKSNWLMMHVSVMMLSYATLMVGAVLAIAFLIVTRGQDVELRGSSVGTGSYRNKLGRIQLSQAEKTPDGSVVAMADGNGSVGTAVLDRVDPQTLVTDLPNLSPQRLNLADTLDNISYRIIGLGFPLLTIGIIAGAVWANEAWGSYWSWDPKETWALITWLVFAAYLHARITRGWQGRKPAILAASGFIVVWVCYLGVNLLGKGLHSYGWFF.

8 helical membrane-spanning segments follow: residues 16–36, 37–57, 68–88, 97–117, 142–162, 249–269, 276–296, and 310–330; these read LILL…GMSI, LPTL…TLLG, LSNL…VHLI, LVGV…ALSL, VMML…AFLI, IIGL…VWAN, WSWD…AAYL, and AILA…VNLL.

It belongs to the CcmF/CycK/Ccl1/NrfE/CcsA family. May interact with ccs1.

It is found in the cellular thylakoid membrane. Its function is as follows. Required during biogenesis of c-type cytochromes (cytochrome c6 and cytochrome f) at the step of heme attachment. The sequence is that of Cytochrome c biogenesis protein CcsA from Rippkaea orientalis (strain PCC 8801 / RF-1) (Cyanothece sp. (strain PCC 8801)).